The following is a 358-amino-acid chain: tRNA-specific 2-thiouridylase MnmA (358 aa).

ATP contacts are provided by residues 7–14 (AMSGGVDS) and leucine 33. Residue cysteine 101 is the Nucleophile of the active site. A disulfide bond links cysteine 101 and cysteine 197. Glycine 125 provides a ligand contact to ATP. Positions 147–149 (KDQ) are interaction with tRNA. Catalysis depends on cysteine 197, which acts as the Cysteine persulfide intermediate.

The protein belongs to the MnmA/TRMU family.

It localises to the cytoplasm. The enzyme catalyses S-sulfanyl-L-cysteinyl-[protein] + uridine(34) in tRNA + AH2 + ATP = 2-thiouridine(34) in tRNA + L-cysteinyl-[protein] + A + AMP + diphosphate + H(+). In terms of biological role, catalyzes the 2-thiolation of uridine at the wobble position (U34) of tRNA, leading to the formation of s(2)U34. The protein is tRNA-specific 2-thiouridylase MnmA of Rickettsia prowazekii (strain Madrid E).